Consider the following 273-residue polypeptide: Dermonecrotic toxin LamSicTox-alphaIC1 (273 aa).

The active site involves His5. Residues Glu25 and Asp27 each contribute to the Mg(2+) site. The active-site Nucleophile is the His41. 2 disulfides stabilise this stretch: Cys45-Cys51 and Cys47-Cys190. Mg(2+) is bound at residue Asp85.

This sequence belongs to the arthropod phospholipase D family. Class II subfamily. Requires Mg(2+) as cofactor. As to expression, expressed by the venom gland.

It is found in the secreted. The catalysed reaction is an N-(acyl)-sphingosylphosphocholine = an N-(acyl)-sphingosyl-1,3-cyclic phosphate + choline. It carries out the reaction an N-(acyl)-sphingosylphosphoethanolamine = an N-(acyl)-sphingosyl-1,3-cyclic phosphate + ethanolamine. The enzyme catalyses a 1-acyl-sn-glycero-3-phosphocholine = a 1-acyl-sn-glycero-2,3-cyclic phosphate + choline. It catalyses the reaction a 1-acyl-sn-glycero-3-phosphoethanolamine = a 1-acyl-sn-glycero-2,3-cyclic phosphate + ethanolamine. Its function is as follows. Dermonecrotic toxins cleave the phosphodiester linkage between the phosphate and headgroup of certain phospholipids (sphingolipid and lysolipid substrates), forming an alcohol (often choline) and a cyclic phosphate. This toxin acts on sphingomyelin (SM). It may also act on ceramide phosphoethanolamine (CPE), lysophosphatidylcholine (LPC) and lysophosphatidylethanolamine (LPE), but not on lysophosphatidylserine (LPS), and lysophosphatidylglycerol (LPG). It acts by transphosphatidylation, releasing exclusively cyclic phosphate products as second products. Induces dermonecrosis, hemolysis, increased vascular permeability, edema, inflammatory response, and platelet aggregation. This Loxosceles amazonica (Recluse spider) protein is Dermonecrotic toxin LamSicTox-alphaIC1.